Reading from the N-terminus, the 130-residue chain is Small ribosomal subunit protein uS8 (130 aa).

The protein belongs to the universal ribosomal protein uS8 family. In terms of assembly, part of the 30S ribosomal subunit. Contacts proteins S5 and S12.

Functionally, one of the primary rRNA binding proteins, it binds directly to 16S rRNA central domain where it helps coordinate assembly of the platform of the 30S subunit. This chain is Small ribosomal subunit protein uS8, found in Pseudoalteromonas translucida (strain TAC 125).